The primary structure comprises 251 residues: Myozenin-3 (251 aa).

A Phosphoserine modification is found at serine 31. The binding to ACTN2, PPP3CA and TCAP stretch occupies residues 50–67 (LLFQKRQRRVQKFTFELA). Positions 67–110 (AASQRAMLAGSARRKVTGTAESGTVANANGPEGPNYRSELHIFP) are binding to FLNC. The interval 79–102 (RRKVTGTAESGTVANANGPEGPNY) is disordered. Residues 186–207 (PSPNDYRNFNKTPVPFGGPLVG) are binding to ACTN2.

The protein belongs to the myozenin family. Interacts with ACTN2, LDB3, FLNC, PPP3CA and TCAP. As to expression, expressed specifically in skeletal muscle. Not detected in heart.

It is found in the cytoplasm. The protein resides in the myofibril. It localises to the sarcomere. The protein localises to the z line. Its function is as follows. Myozenins may serve as intracellular binding proteins involved in linking Z line proteins such as alpha-actinin, gamma-filamin, TCAP/telethonin, LDB3/ZASP and localizing calcineurin signaling to the sarcomere. Plays an important role in the modulation of calcineurin signaling. May play a role in myofibrillogenesis. The sequence is that of Myozenin-3 from Homo sapiens (Human).